A 226-amino-acid chain; its full sequence is Triosephosphate isomerase (226 aa).

Residue 10 to 12 (NFK) participates in substrate binding. Residue histidine 96 is the Electrophile of the active site. Glutamate 144 serves as the catalytic Proton acceptor. Substrate is bound by residues isoleucine 149, glycine 184, and 205 to 206 (AS).

This sequence belongs to the triosephosphate isomerase family. As to quaternary structure, homotetramer; dimer of dimers.

The protein localises to the cytoplasm. It catalyses the reaction D-glyceraldehyde 3-phosphate = dihydroxyacetone phosphate. It functions in the pathway carbohydrate biosynthesis; gluconeogenesis. It participates in carbohydrate degradation; glycolysis; D-glyceraldehyde 3-phosphate from glycerone phosphate: step 1/1. Involved in the gluconeogenesis. Catalyzes stereospecifically the conversion of dihydroxyacetone phosphate (DHAP) to D-glyceraldehyde-3-phosphate (G3P). This is Triosephosphate isomerase from Methanopyrus kandleri (strain AV19 / DSM 6324 / JCM 9639 / NBRC 100938).